Consider the following 118-residue polypeptide: Large ribosomal subunit protein bL20 (118 aa).

This sequence belongs to the bacterial ribosomal protein bL20 family.

Its function is as follows. Binds directly to 23S ribosomal RNA and is necessary for the in vitro assembly process of the 50S ribosomal subunit. It is not involved in the protein synthesizing functions of that subunit. This is Large ribosomal subunit protein bL20 from Rhodopirellula baltica (strain DSM 10527 / NCIMB 13988 / SH1).